Consider the following 534-residue polypeptide: MKKLTIVPSSFRLLSIGSYVELIEANGRDRLFCRGRVLHAHLVTSGIARLTRIAAKLVTFYVECGKVLDARKVFDEMPKRDISGCVVMIGACARNGYYQESLDFFREMYKDGLKLDAFIVPSLLKASRNLLDREFGKMIHCLVLKFSYESDAFIVSSLIDMYSKFGEVGNARKVFSDLGEQDLVVFNAMISGYANNSQADEALNLVKDMKLLGIKPDVITWNALISGFSHMRNEEKVSEILELMCLDGYKPDVVSWTSIISGLVHNFQNEKAFDAFKQMLTHGLYPNSATIITLLPACTTLAYMKHGKEIHGYSVVTGLEDHGFVRSALLDMYGKCGFISEAMILFRKTPKKTTVTFNSMIFCYANHGLADKAVELFDQMEATGEKLDHLTFTAILTACSHAGLTDLGQNLFLLMQNKYRIVPRLEHYACMVDLLGRAGKLVEAYEMIKAMRMEPDLFVWGALLAACRNHGNMELARIAAKHLAELEPENSGNGLLLTSLYANAGSWESVVRMKKMIKKKRFRRFLGSSWVETV.

12 PPR repeats span residues 50-80 (LTRIAAKLVTFYVECGKVLDARKVFDEMPKR), 81-115 (DISGCVVMIGACARNGYYQESLDFFREMYKDGLKL), 116-150 (DAFIVPSLLKASRNLLDREFGKMIHCLVLKFSYES), 151-181 (DAFIVSSLIDMYSKFGEVGNARKVFSDLGEQ), 182-216 (DLVVFNAMISGYANNSQADEALNLVKDMKLLGIKP), 217-251 (DVITWNALISGFSHMRNEEKVSEILELMCLDGYKP), 252-286 (DVVSWTSIISGLVHNFQNEKAFDAFKQMLTHGLYP), 287-321 (NSATIITLLPACTTLAYMKHGKEIHGYSVVTGLED), 322-352 (HGFVRSALLDMYGKCGFISEAMILFRKTPKK), 353-387 (TTVTFNSMIFCYANHGLADKAVELFDQMEATGEKL), 388-418 (DHLTFTAILTACSHAGLTDLGQNLFLLMQNK), and 424-454 (RLEHYACMVDLLGRAGKLVEAYEMIKAMRME). The segment at 459 to 534 (VWGALLAACR…FLGSSWVETV (76 aa)) is type E motif.

It belongs to the PPR family. PCMP-E subfamily.

This is Pentatricopeptide repeat-containing protein At5g59600 (PCMP-E1) from Arabidopsis thaliana (Mouse-ear cress).